Reading from the N-terminus, the 222-residue chain is Capsular polysaccharide type 5 biosynthesis protein cap5A (222 aa).

Transmembrane regions (helical) follow at residues 20–40 (ILII…FFVL) and 172–192 (VVNL…YIFF).

The protein belongs to the CpsC/CapA family.

The protein localises to the cell membrane. Functionally, required for the biosynthesis of type 5 capsular polysaccharide (Cap5/CP5). Might act as the chain-length regulator. This chain is Capsular polysaccharide type 5 biosynthesis protein cap5A (cap5A), found in Staphylococcus aureus (strain Newman).